An 88-amino-acid chain; its full sequence is Small ribosomal subunit protein bS20 (88 aa).

Disordered regions lie at residues 1 to 25 (MPNI…KAVK) and 68 to 88 (HKNQ…SLAA).

The protein belongs to the bacterial ribosomal protein bS20 family.

Its function is as follows. Binds directly to 16S ribosomal RNA. The polypeptide is Small ribosomal subunit protein bS20 (Cutibacterium acnes (strain DSM 16379 / KPA171202) (Propionibacterium acnes)).